The sequence spans 95 residues: Large ribosomal subunit protein bL25 (95 aa).

This sequence belongs to the bacterial ribosomal protein bL25 family. In terms of assembly, part of the 50S ribosomal subunit; part of the 5S rRNA/L5/L18/L25 subcomplex. Contacts the 5S rRNA. Binds to the 5S rRNA independently of L5 and L18.

Its function is as follows. This is one of the proteins that binds to the 5S RNA in the ribosome where it forms part of the central protuberance. This is Large ribosomal subunit protein bL25 from Tolumonas auensis (strain DSM 9187 / NBRC 110442 / TA 4).